The following is a 681-amino-acid chain: Potassium-transporting ATPase ATP-binding subunit (681 aa).

The next 4 helical transmembrane spans lie at 30–50, 59–79, 216–236, and 255–275; these read LLVY…FFGI, LAIA…EAIA, ILLV…LPFT, and IALL…SIGI. The 4-aspartylphosphate intermediate role is filled by Asp306. ATP contacts are provided by residues Asp343, Glu347, 376–383, and Lys394; that span reads FTATTRMS. Positions 517 and 521 each coordinate Mg(2+). Transmembrane regions (helical) follow at residues 587–607, 615–635, and 661–681; these read FAII…LNLM, AILS…PLSL, and LIAP…LGIV.

Belongs to the cation transport ATPase (P-type) (TC 3.A.3) family. Type IA subfamily. In terms of assembly, the system is composed of three essential subunits: KdpA, KdpB and KdpC.

It is found in the cell membrane. It catalyses the reaction K(+)(out) + ATP + H2O = K(+)(in) + ADP + phosphate + H(+). Part of the high-affinity ATP-driven potassium transport (or Kdp) system, which catalyzes the hydrolysis of ATP coupled with the electrogenic transport of potassium into the cytoplasm. This subunit is responsible for energy coupling to the transport system and for the release of the potassium ions to the cytoplasm. The sequence is that of Potassium-transporting ATPase ATP-binding subunit from Listeria monocytogenes serovar 1/2a (strain ATCC BAA-679 / EGD-e).